A 104-amino-acid polypeptide reads, in one-letter code: Phosphoribosyl-ATP pyrophosphatase (104 aa).

This sequence belongs to the PRA-PH family.

It localises to the cytoplasm. It catalyses the reaction 1-(5-phospho-beta-D-ribosyl)-ATP + H2O = 1-(5-phospho-beta-D-ribosyl)-5'-AMP + diphosphate + H(+). It functions in the pathway amino-acid biosynthesis; L-histidine biosynthesis; L-histidine from 5-phospho-alpha-D-ribose 1-diphosphate: step 2/9. The protein is Phosphoribosyl-ATP pyrophosphatase of Streptococcus sanguinis (strain SK36).